The following is a 393-amino-acid chain: Rhizopuspepsin (393 aa).

The first 21 residues, 1–21, serve as a signal peptide directing secretion; that stretch reads MKFTLISSCIAIAALAVAVDA. Positions 22-68 are cleaved as a propeptide — activation peptide; the sequence is APGEKKISIPLAKNPNYKPSAKNAIQKAIAKYNKHKINTSTGGIVPD. A Peptidase A1 domain is found at 85 to 389; that stretch reads YYGQVTIGTP…NQGVPEVQIA (305 aa). Asp103 is a catalytic residue. Cysteines 116 and 119 form a disulfide. The active site involves Asp286. Residues Cys320 and Cys353 are joined by a disulfide bond.

The protein belongs to the peptidase A1 family.

The enzyme catalyses Hydrolysis of proteins with broad specificity similar to that of pepsin A, preferring hydrophobic residues at P1 and P1'. Clots milk and activates trypsinogen. Does not cleave 4-Gln-|-His-5, but does cleave 10-His-|-Leu-11 and 12-Val-|-Glu-13 in B chain of insulin.. The protein is Rhizopuspepsin of Rhizopus chinensis (Bread mold).